The sequence spans 448 residues: Probable glycine dehydrogenase (decarboxylating) subunit 1 (448 aa).

This sequence belongs to the GcvP family. N-terminal subunit subfamily. As to quaternary structure, the glycine cleavage system is composed of four proteins: P, T, L and H. In this organism, the P 'protein' is a heterodimer of two subunits.

The catalysed reaction is N(6)-[(R)-lipoyl]-L-lysyl-[glycine-cleavage complex H protein] + glycine + H(+) = N(6)-[(R)-S(8)-aminomethyldihydrolipoyl]-L-lysyl-[glycine-cleavage complex H protein] + CO2. Functionally, the glycine cleavage system catalyzes the degradation of glycine. The P protein binds the alpha-amino group of glycine through its pyridoxal phosphate cofactor; CO(2) is released and the remaining methylamine moiety is then transferred to the lipoamide cofactor of the H protein. The sequence is that of Probable glycine dehydrogenase (decarboxylating) subunit 1 from Staphylococcus aureus (strain COL).